The following is a 292-amino-acid chain: Protease HtpX (292 aa).

2 helical membrane passes run 4–24 (IILF…ILAV) and 32–52 (IYGL…LSLI). Histidine 139 serves as a coordination point for Zn(2+). Residue glutamate 140 is part of the active site. Histidine 143 contributes to the Zn(2+) binding site. 2 consecutive transmembrane segments (helical) span residues 150–170 (ITMT…SRII) and 193–213 (FLFF…ASII). Glutamate 222 contributes to the Zn(2+) binding site.

This sequence belongs to the peptidase M48B family. Requires Zn(2+) as cofactor.

It localises to the cell membrane. This is Protease HtpX from Buchnera aphidicola subsp. Schizaphis graminum (strain Sg).